A 652-amino-acid chain; its full sequence is tRNA 5-methylaminomethyl-2-thiouridine biosynthesis bifunctional protein MnmC (652 aa).

Residues 1–227 are tRNA (mnm(5)s(2)U34)-methyltransferase; that stretch reads MLSWKNDLTP…KREMLTGKYS (227 aa). The FAD-dependent cmnm(5)s(2)U34 oxidoreductase stretch occupies residues 259–652; sequence IGAGIAGSTL…ARFLYRRIRK (394 aa).

In the N-terminal section; belongs to the methyltransferase superfamily. tRNA (mnm(5)s(2)U34)-methyltransferase family. The protein in the C-terminal section; belongs to the DAO family. Requires FAD as cofactor.

The protein localises to the cytoplasm. It carries out the reaction 5-aminomethyl-2-thiouridine(34) in tRNA + S-adenosyl-L-methionine = 5-methylaminomethyl-2-thiouridine(34) in tRNA + S-adenosyl-L-homocysteine + H(+). Its function is as follows. Catalyzes the last two steps in the biosynthesis of 5-methylaminomethyl-2-thiouridine (mnm(5)s(2)U) at the wobble position (U34) in tRNA. Catalyzes the FAD-dependent demodification of cmnm(5)s(2)U34 to nm(5)s(2)U34, followed by the transfer of a methyl group from S-adenosyl-L-methionine to nm(5)s(2)U34, to form mnm(5)s(2)U34. The sequence is that of tRNA 5-methylaminomethyl-2-thiouridine biosynthesis bifunctional protein MnmC from Leptospira borgpetersenii serovar Hardjo-bovis (strain JB197).